Consider the following 386-residue polypeptide: MLAVHFGAGNIGRGFIGQLLQKAGYEIAFVDVNAALVDELNERKMYRVQLATTGKPESVVEGVRAINGQDVAAVAEAIATADLVTTAVGPNILPHIAGAIAAGITQRLTVHARPLNVIACENMIGGSEKLKEHVYEHLTESVQAQAAQWIGFPNAAVDRIVPLQQHADKLLVMVEPFFEWVVDSSQIVGEVPAIEGVTYVEDLAPYIERKLFTVNTGHAVIAYLGYQLGMKTIDEAMRDDRIVQATRGALQETGALLAAKYGFDPQVHGQYVEKILGRYTNPLLSDDIVRVARSPIRKLSQHDRLVGPALQCMEKGMNASYLGLAIAAALAFDYPEDAESARIQASLKEFGWENTLHNCTGIPAGHPLEEIVREQARRLKEWSGSH.

Position 3–14 (3–14 (AVHFGAGNIGRG)) interacts with NAD(+).

This sequence belongs to the mannitol dehydrogenase family.

The catalysed reaction is D-mannitol 1-phosphate + NAD(+) = beta-D-fructose 6-phosphate + NADH + H(+). In Brevibacillus brevis (strain 47 / JCM 6285 / NBRC 100599), this protein is Mannitol-1-phosphate 5-dehydrogenase.